The chain runs to 483 residues: Regulatory protein ViaA (483 aa).

Belongs to the ViaA family. In terms of assembly, homodimer. Interacts with RavA.

Its subcellular location is the cytoplasm. Functionally, component of the RavA-ViaA chaperone complex, which may act on the membrane to optimize the function of some of the respiratory chains. ViaA stimulates the ATPase activity of RavA. The polypeptide is Regulatory protein ViaA (Salmonella choleraesuis (strain SC-B67)).